Here is a 264-residue protein sequence, read N- to C-terminus: ATP synthase subunit a (264 aa).

6 consecutive transmembrane segments (helical) span residues 32–52 (IDSLFFSVGLGVLFLWLFHSV), 89–109 (VIAPLALTIFVWVFMMNFMDM), 134–154 (DLNITFSMAIGVFLLIIYYSI), 177–197 (IPVNFLLETVTLIAKPISLAL), 208–228 (LIFILIALMYGANWALSTLGV), and 235–255 (LIFHILVITLQAFIFMMLTIV).

This sequence belongs to the ATPase A chain family. In terms of assembly, F-type ATPases have 2 components, CF(1) - the catalytic core - and CF(0) - the membrane proton channel. CF(1) has five subunits: alpha(3), beta(3), gamma(1), delta(1), epsilon(1). CF(0) has three main subunits: a(1), b(2) and c(9-12). The alpha and beta chains form an alternating ring which encloses part of the gamma chain. CF(1) is attached to CF(0) by a central stalk formed by the gamma and epsilon chains, while a peripheral stalk is formed by the delta and b chains.

The protein resides in the cell inner membrane. In terms of biological role, key component of the proton channel; it plays a direct role in the translocation of protons across the membrane. This Shewanella piezotolerans (strain WP3 / JCM 13877) protein is ATP synthase subunit a.